The primary structure comprises 420 residues: MSFTTISVIGLGYIGLPTAAAFASRQKQVIGVDINQHAVDIINRGEIHIVEPALGNVVKMAVEGGFLRATTTPVEADAYLIAVPTPFKGDHDPDMAYVEAAAKSIAPVLKKGALVILESTSPVGATEQMAGWLAGMRTDLTFPQQAGEQADVNIAYCPERVLPGQVMVELIKNDRVIGGMTPVCSARASALYKIFLEGECVVTNSRTAEMCKLTENSFRDVNIAFANELSLICAEQGINVWELIRLANRHPRVNILQPGPGVGGHCIAVDPWFIVAQNPQQARLIRTAREVNDGKPHWVVDQVKAAVTDCLAATDKRASEVKIACFGLAFKPNIDDLRESPAMGIAQSIARWHSGETLVVEPNIRQLPKKLDGLCTLAKLDAALAAADVLVMLVDHDEFKAIPGDAVHQRYVVDTKGVWR.

NAD(+) contacts are provided by Tyr-13, Ile-14, Asp-33, Thr-85, and Thr-126. UDP-N-acetyl-alpha-D-mannosaminouronate is bound by residues Arg-160, Val-161, Lys-212, Asn-216, Arg-219, His-250, Arg-252, and Gly-263. Lys-212 functions as the Proton donor/acceptor in the catalytic mechanism. Catalysis depends on Cys-266, which acts as the Nucleophile. Residues Phe-330 and Lys-331 each contribute to the UDP-N-acetyl-alpha-D-mannosaminouronate site. An NAD(+)-binding site is contributed by Arg-338. Position 416 (Lys-416) interacts with UDP-N-acetyl-alpha-D-mannosaminouronate.

It belongs to the UDP-glucose/GDP-mannose dehydrogenase family. WecC subfamily. In terms of assembly, homodimer.

The enzyme catalyses UDP-N-acetyl-alpha-D-mannosamine + 2 NAD(+) + H2O = UDP-N-acetyl-alpha-D-mannosaminouronate + 2 NADH + 3 H(+). Its pathway is bacterial outer membrane biogenesis; enterobacterial common antigen biosynthesis. Functionally, catalyzes the four-electron oxidation of UDP-N-acetyl-D-mannosamine (UDP-ManNAc), reducing NAD(+) and releasing UDP-N-acetylmannosaminuronic acid (UDP-ManNAcA). The polypeptide is UDP-N-acetyl-D-mannosamine dehydrogenase (Salmonella typhimurium (strain LT2 / SGSC1412 / ATCC 700720)).